The following is a 146-amino-acid chain: Anti-sigma F factor (146 aa).

Belongs to the anti-sigma-factor family.

The enzyme catalyses L-seryl-[protein] + ATP = O-phospho-L-seryl-[protein] + ADP + H(+). The catalysed reaction is L-threonyl-[protein] + ATP = O-phospho-L-threonyl-[protein] + ADP + H(+). Its function is as follows. Binds to sigma F and blocks its ability to form an RNA polymerase holoenzyme (E-sigma F). Phosphorylates SpoIIAA on a serine residue. This phosphorylation may enable SpoIIAA to act as an anti-anti-sigma factor that counteracts SpoIIAB and thus releases sigma F from inhibition. This chain is Anti-sigma F factor, found in Lysinibacillus sphaericus (Bacillus sphaericus).